We begin with the raw amino-acid sequence, 225 residues long: Octanoyltransferase (225 aa).

A BPL/LPL catalytic domain is found at 44 to 219 (RETPDEIWLL…NFIAQLTHRI (176 aa)). Substrate-binding positions include 83–90 (RGGQITYH), 150–152 (SLG), and 163–165 (GIA). C181 serves as the catalytic Acyl-thioester intermediate.

It belongs to the LipB family.

The protein localises to the cytoplasm. It carries out the reaction octanoyl-[ACP] + L-lysyl-[protein] = N(6)-octanoyl-L-lysyl-[protein] + holo-[ACP] + H(+). The protein operates within protein modification; protein lipoylation via endogenous pathway; protein N(6)-(lipoyl)lysine from octanoyl-[acyl-carrier-protein]: step 1/2. Catalyzes the transfer of endogenously produced octanoic acid from octanoyl-acyl-carrier-protein onto the lipoyl domains of lipoate-dependent enzymes. Lipoyl-ACP can also act as a substrate although octanoyl-ACP is likely to be the physiological substrate. The chain is Octanoyltransferase from Nitrosomonas eutropha (strain DSM 101675 / C91 / Nm57).